We begin with the raw amino-acid sequence, 422 residues long: Protein MANNAN SYNTHESIS-RELATED 1 (422 aa).

Residues 1–6 (MGVDLR) lie on the Cytoplasmic side of the membrane. Residues 7 to 26 (QVVAGILTITMFVMLGQMLH) form a helical; Signal-anchor for type II membrane protein membrane-spanning segment. Topologically, residues 27-422 (RDYFDSLQEK…KNHLAYSCFC (396 aa)) are lumenal. Substrate is bound at residue 263–265 (DLR).

Belongs to the glycosyltransferase GT106 family. In terms of tissue distribution, widely expressed.

It localises to the golgi apparatus membrane. It functions in the pathway glycan biosynthesis. In terms of biological role, glycosyltransferase involved in mannan biosynthesis. This Arabidopsis thaliana (Mouse-ear cress) protein is Protein MANNAN SYNTHESIS-RELATED 1.